Reading from the N-terminus, the 315-residue chain is MVVSLAGRDLLCLQDYTAEEIWTILETAKMFKIWQKIGKPHRLLEGKTLAMIFQKPSTRTRVSFEVAMAHLGGHALYLNAQDLQLRRGETIADTARVLSRYVDAIMARVYDHKDVEDLAKYATVPVINGLSDFSHPCQALADYMTIWEKKGTIKGVKVVYVGDGNNVAHSLMIAGTKLGADVVVATPEGYEPDEKVIKWAEQNAAESGGSFELLHDPVKAVKDADVIYTDVWASMGQEAEAEERRKIFRPFQVNKDLVKHAKPDYMFMHCLPAHRGEEVTDDVIDSPNSVVWDQAENRLHAQKAVLALVMGGIKF.

Carbamoyl phosphate is bound by residues 57–60 (STRT), glutamine 84, arginine 108, and 135–138 (HPCQ). L-ornithine contacts are provided by residues asparagine 166, aspartate 230, and 234–235 (SM). Residues 270 to 271 (CL) and arginine 298 contribute to the carbamoyl phosphate site.

The protein belongs to the aspartate/ornithine carbamoyltransferase superfamily. OTCase family. As to quaternary structure, homododecamer (tetramer of trimers).

It localises to the cytoplasm. It catalyses the reaction carbamoyl phosphate + L-ornithine = L-citrulline + phosphate + H(+). It functions in the pathway amino-acid biosynthesis; L-arginine biosynthesis; L-arginine from L-ornithine and carbamoyl phosphate: step 1/3. With respect to regulation, inhibited by the bisubstrate delta-N-phosphonoacetyl-L-ornithine (PALO). Its function is as follows. Reversibly catalyzes the transfer of the carbamoyl group from carbamoyl phosphate (CP) to the N(epsilon) atom of ornithine (ORN) to produce L-citrulline, which is a substrate for argininosuccinate synthetase, the enzyme involved in the final step in arginine biosynthesis. This is Ornithine carbamoyltransferase, anabolic from Pyrococcus furiosus (strain ATCC 43587 / DSM 3638 / JCM 8422 / Vc1).